The chain runs to 33 residues: VIGGDEXDINEHRSLALMYXSWSHRFIXXGXLI.

The region spanning 1–33 (VIGGDEXDINEHRSLALMYXSWSHRFIXXGXLI) is the Peptidase S1 domain.

Belongs to the peptidase S1 family. Snake venom subfamily. In terms of assembly, homodimer. As to expression, expressed by the venom gland.

It localises to the secreted. The enzyme catalyses Selective cleavage of Arg-|-Xaa bond in fibrinogen, to form fibrin, and release fibrinopeptide A. The specificity of further degradation of fibrinogen varies with species origin of the enzyme.. Its function is as follows. Thrombin-like snake venom serine protease that displays clotting activity on fibrinogen. Shows both arginine-ester hydrolase and amidase activities on synthetic substrates. Also shows proteolytic activity toward casein. The chain is Thrombin-like enzyme RP34 from Cerastes cerastes (Horned desert viper).